The chain runs to 626 residues: Chaperone protein DnaK (626 aa).

Threonine 175 carries the phosphothreonine; by autocatalysis modification. Residues 586 to 606 show a composition bias toward low complexity; that stretch reads GAEGAAAGADGAGASAGSASG. The interval 586–626 is disordered; it reads GAEGAAAGADGAGASAGSASGSDDDTVEAEVVDDDDDKDNK. Acidic residues predominate over residues 607–626; sequence SDDDTVEAEVVDDDDDKDNK.

Belongs to the heat shock protein 70 family.

Functionally, acts as a chaperone. This chain is Chaperone protein DnaK, found in Bifidobacterium longum (strain DJO10A).